Here is a 261-residue protein sequence, read N- to C-terminus: Syntaxin-7 (261 aa).

Residue Ser-2 is modified to N-acetylserine. Residues 2–238 (SYTPGVGGDP…DYQRKSRKTL (237 aa)) lie on the Cytoplasmic side of the membrane. Residue Thr-4 is modified to Phosphothreonine. Ser-45 carries the phosphoserine modification. Positions 47–69 (ELRQQLQQKQQYTNQLTKETDKY) form a coiled coil. A Phosphoserine modification is found at Ser-75. At Thr-79 the chain carries Phosphothreonine. 4 positions are modified to phosphoserine: Ser-125, Ser-126, Ser-129, and Ser-205. A disordered region spans residues 129–148 (SGSFPEDSSKERNLVSWESQ). The 63-residue stretch at 165 to 227 (LRLIHERESS…QQANQQLSRA (63 aa)) folds into the t-SNARE coiled-coil homology domain. A helical; Anchor for type IV membrane protein transmembrane segment spans residues 239–259 (CIIILILVIGVVIIGLIIWGL). Residues 260-261 (NR) lie on the Vesicular side of the membrane.

This sequence belongs to the syntaxin family. Forms a SNARE complex with VTI1B, STX8 and VAMP8 which functions in the homotypic fusion of late endosomes. Component of the SNARE complex composed of STX7, STX8, VAMP7 and VTI1B that is required for heterotypic fusion of late endosomes with lysosomes. Interacts with VPS11, VPS16 and VPS18. Interacts with VPS33A. Interacts with TPC1.

Its subcellular location is the early endosome membrane. May be involved in protein trafficking from the plasma membrane to the early endosome (EE) as well as in homotypic fusion of endocytic organelles. Mediates the endocytic trafficking from early endosomes to late endosomes and lysosomes. In Pongo abelii (Sumatran orangutan), this protein is Syntaxin-7 (STX7).